We begin with the raw amino-acid sequence, 92 residues long: UPF0213 protein M28_Spy1146 (92 aa).

The 77-residue stretch at 4-80 (KKAYMYVLEC…KRKTRSQKLA (77 aa)) folds into the GIY-YIG domain.

Belongs to the UPF0213 family.

The protein is UPF0213 protein M28_Spy1146 of Streptococcus pyogenes serotype M28 (strain MGAS6180).